A 534-amino-acid polypeptide reads, in one-letter code: MEVLGFLSPELNGPMVTMALAVVLLALLKWYSTSAFSRLEKLGIRHPKPSPFIGNLTFFRQGFWESHMELRKQYGPLSGYYLGRRMIVVISDPDMIKQVLAEKFSNFTNRMATGLESKPVADSILFLRDKRWEEVRSVLTSAFSPKKLNKLTPLISQACDLLLAHLERYAESGDAFDIQRCYCCYTTDVVASVAFGTQVNSSEEPEHPFVKHCRRFFAFSVPRLILVLILSFPSIMVPLARILPNKKRDEVNGFFNKLIRNVIALRDQQAAEERRQDFLQMVLDLRHSAPSVGVENFDIVRQAFSSAKGCPADPSQPHLPRPLSKPLTVDEVVGQAFLFLIAGYEIITNTLSFVTYLLATNPDCQEKLLREVDDFSKKHPSPEHCSLQQGLPYLDMVLSETLRMYPPAFRFTREAARDCEVLGQRIPAGTVLEVAVGALHHDPKHWPHPETFDPERFTAEAQRLQQPFTYLPFGAGPRSCLGVQLGLLEIKLTLLHILRKFRFEACPETQVPLQLESKSALSPKNGVYIRIVPR.

Over 1–10 (MEVLGFLSPE) the chain is Cytoplasmic. A helical membrane pass occupies residues 11 to 31 (LNGPMVTMALAVVLLALLKWY). Over 32–75 (STSAFSRLEKLGIRHPKPSPFIGNLTFFRQGFWESHMELRKQYG) the chain is Lumenal. A helical transmembrane segment spans residues 76 to 96 (PLSGYYLGRRMIVVISDPDMI). Residues 97–223 (KQVLAEKFSN…RRFFAFSVPR (127 aa)) are Cytoplasmic-facing. A helical membrane pass occupies residues 224 to 244 (LILVLILSFPSIMVPLARILP). The Lumenal portion of the chain corresponds to 245–336 (NKKRDEVNGF…LTVDEVVGQA (92 aa)). A helical transmembrane segment spans residues 337–357 (FLFLIAGYEIITNTLSFVTYL). The Cytoplasmic segment spans residues 358 to 534 (LATNPDCQEK…NGVYIRIVPR (177 aa)). Cys-480 contributes to the heme binding site.

The protein belongs to the cytochrome P450 family. As to quaternary structure, monomer. Requires heme as cofactor. In terms of tissue distribution, expressed in lung, kidney and thymus.

It localises to the endoplasmic reticulum membrane. The catalysed reaction is prostaglandin H2 = thromboxane A2. The enzyme catalyses prostaglandin H2 = (12S)-hydroxy-(5Z,8E,10E)-heptadecatrienoate + malonaldehyde. It carries out the reaction a hydroperoxyeicosatetraenoate = an oxoeicosatetraenoate + H2O. It catalyses the reaction (15S)-hydroperoxy-(5Z,8Z,11Z,13E)-eicosatetraenoate = 15-oxo-(5Z,8Z,11Z,13E)-eicosatetraenoate + H2O. The catalysed reaction is (15S)-hydroperoxy-(5Z,8Z,11Z,13E)-eicosatetraenoate + AH2 = (15S)-hydroxy-(5Z,8Z,11Z,13E)-eicosatetraenoate + A + H2O. In terms of biological role, catalyzes the conversion of prostaglandin H2 (PGH2) to thromboxane A2 (TXA2), a potent inducer of blood vessel constriction and platelet aggregation. Also cleaves PGH2 to 12-hydroxy-heptadecatrienoicacid (12-HHT) and malondialdehyde, which is known to act as a mediator of DNA damage. 12-HHT and malondialdehyde are formed stoichiometrically in the same amounts as TXA2. Additionally, displays dehydratase activity, toward (15S)-hydroperoxy-(5Z,8Z,11Z,13E)-eicosatetraenoate (15(S)-HPETE) producing 15-KETE and 15-HETE. The chain is Thromboxane-A synthase (TBXAS1) from Sus scrofa (Pig).